The chain runs to 640 residues: WW domain-binding protein 11 (640 aa).

Positions 1-11 (MGRRSTSSTKS) are enriched in polar residues. Residues 1–37 (MGRRSTSSTKSGKFMNPTDQARKEARKRELKKNKKQR) are disordered. Residues 28 to 37 (RELKKNKKQR) are compositionally biased toward basic residues. The stretch at 75 to 122 (EKVLRDKRKKLRETFERIVRLYERENPETYKELRKLELEYETKRGQLS) forms a coiled coil. Disordered stretches follow at residues 155–174 (DIPL…SALG), 187–563 (VPRL…ISAK), and 582–625 (RVRR…LKTK). Over residues 194-207 (RKPPGPPPGPPPPQ) the composition is skewed to pro residues. Over residues 230-240 (DGGRDSDSKSE) the composition is skewed to basic and acidic residues. Positions 241-251 (ADEESDSQEDS) are enriched in acidic residues. Residues 252-274 (SAEREDSDRGERDEERERADKHT) are compositionally biased toward basic and acidic residues. Position 285 is a phosphoserine (S285). Residues 315-338 (PEEEEEDEEEEYSESEDSEAEDQA) show a composition bias toward acidic residues. Residues 356-371 (APMAAQQPPSLMQAPP) are compositionally biased toward low complexity. 2 stretches are compositionally biased toward pro residues: residues 372 to 412 (ITGP…PPGL) and 422 to 491 (RLLP…PPLN). The short motif at 421-432 (PRLLPPGPPPGR) is the PGR element. Gly residues predominate over residues 547–558 (GSGGASAQGGGA). The span at 586 to 599 (DRAGGTGRREEERP) shows a compositional bias: basic and acidic residues. The span at 603–616 (QQTPAHQAPPIAHA) shows a compositional bias: low complexity.

The protein resides in the cytoplasm. It is found in the nucleus. Functionally, activates pre-mRNA splicing. This Danio rerio (Zebrafish) protein is WW domain-binding protein 11 (wbp11).